We begin with the raw amino-acid sequence, 115 residues long: Replication initiation control protein YabA (115 aa).

The Zn(2+) site is built by histidine 90, cysteine 92, cysteine 106, and cysteine 109.

The protein belongs to the YabA family. In terms of assembly, homotetramer. Interacts with both DnaA and DnaN, acting as a bridge between these two proteins. Zn(2+) serves as cofactor.

The protein resides in the cytoplasm. Its subcellular location is the nucleoid. Functionally, involved in control of chromosome replication initiation. Inhibits the cooperative binding of DnaA to the oriC region, thus negatively regulating initiation of chromosome replication. Inhibits the ability of DnaA-ATP to form a helix on DNA; does not disassemble preformed DnaA-DNA helices. Decreases the residence time of DnaA on the chromosome at its binding sites (oriC, replication forks and promoter-binding sites). Tethers DnaA to the replication machinery via the DNA polymerase beta sliding clamp subunit (dnaN). Associates with oriC and other DnaA targets on the chromosome in a DnaA-dependent manner. The chain is Replication initiation control protein YabA from Staphylococcus epidermidis (strain ATCC 35984 / DSM 28319 / BCRC 17069 / CCUG 31568 / BM 3577 / RP62A).